A 484-amino-acid chain; its full sequence is F-box/LRR-repeat protein At3g59210 (484 aa).

Residues 6 to 54 (KDIINCLPDNLLCQILSNLSTKEAALTSLLSKRWRYLFALVPNLDFDVL) form the F-box domain. LRR repeat units lie at residues 144 to 170 (KIGPKDGPRVKLRNVCLPKLKTLNLDS), 172 to 197 (VFEEGKIGFAKLLSGCPVLEELSLLN), 205 to 234 (SCSVSSKILKRLTLYCAHSSRNPKSVSFDT), 303 to 334 (TLYLSYDTLETLNLCCQVIPVFNNLTHLTIES), and 335 to 360 (HPELGWESLPNLLKSCPNLGTLVFQG).

This is F-box/LRR-repeat protein At3g59210 from Arabidopsis thaliana (Mouse-ear cress).